An 826-amino-acid chain; its full sequence is Ubiquitin carboxyl-terminal hydrolase 16 (826 aa).

The UBP-type zinc finger occupies 22–142 (PVCRHIRKGL…QVVDYVRKQA (121 aa)). 12 residues coordinate Zn(2+): Cys-24, His-26, Cys-48, Cys-51, Cys-74, Cys-77, Cys-82, His-90, His-94, His-103, Cys-116, and Cys-119. Residue Lys-140 forms a Glycyl lysine isopeptide (Lys-Gly) (interchain with G-Cter in SUMO2) linkage. Residues 144–189 (NTTPESAEDNGNIELENKKLEKESKNEQEREKKENMARENPSMNST) form a disordered region. The segment covering 158–180 (LENKKLEKESKNEQEREKKENMA) has biased composition (basic and acidic residues). Ser-188 carries the post-translational modification Phosphoserine. The USP domain maps to 195-825 (KGLSNLGNTC…QAYLLFYERI (631 aa)). Cys-204 acts as the Nucleophile in catalysis. Residues 393-407 (SGKKSINDKNLKKTM) show a composition bias toward basic and acidic residues. Residues 393–458 (SGKKSINDKN…QAKNQRRQQK (66 aa)) form a disordered region. Over residues 408–419 (EDEDKDSEEEKD) the composition is skewed to acidic residues. Phosphoserine is present on Ser-414. The segment covering 420 to 429 (NDSYLKERND) has biased composition (basic and acidic residues). Residues 437–457 (HLQKKAKKQAKKQAKNQRRQQ) show a composition bias toward basic residues. Phosphoserine occurs at positions 530 and 551. The Proton acceptor role is filled by His-760.

Belongs to the peptidase C19 family. USP16 subfamily. In terms of assembly, homotetramer. Associates with late pre-40S ribosomes. Interacts with CEP78; promoting deubiquitination of tektins. Phosphorylated at the onset of mitosis and dephosphorylated during the metaphase/anaphase transition. Phosphorylation by AURKB enhances the deubiquitinase activity.

Its subcellular location is the nucleus. The enzyme catalyses Thiol-dependent hydrolysis of ester, thioester, amide, peptide and isopeptide bonds formed by the C-terminal Gly of ubiquitin (a 76-residue protein attached to proteins as an intracellular targeting signal).. Functionally, specifically deubiquitinates 'Lys-120' of histone H2A (H2AK119Ub), a specific tag for epigenetic transcriptional repression, thereby acting as a coactivator. Deubiquitination of histone H2A is a prerequisite for subsequent phosphorylation at 'Ser-11' of histone H3 (H3S10ph), and is required for chromosome segregation when cells enter into mitosis. In resting B- and T-lymphocytes, phosphorylation by AURKB leads to enhance its activity, thereby maintaining transcription in resting lymphocytes. Regulates Hox gene expression via histone H2A deubiquitination. Prefers nucleosomal substrates. Does not deubiquitinate histone H2B. Also deubiquitinates non-histone proteins, such as ribosomal protein RPS27A: deubiquitination of monoubiquitinated RPS27A promotes maturation of the 40S ribosomal subunit. Also mediates deubiquitination of tektin proteins (TEKT1, TEKT2, TEK3, TEKT4 and TEKT5), promoting their stability. The chain is Ubiquitin carboxyl-terminal hydrolase 16 from Bos taurus (Bovine).